The primary structure comprises 439 residues: Ribosomal protein uS12 methylthiotransferase RimO (439 aa).

One can recognise an MTTase N-terminal domain in the interval 7–119 (KQLCLISLGC…IDILIAKKQN (113 aa)). [4Fe-4S] cluster-binding residues include C16, C50, C82, C151, C155, and C158. The Radical SAM core domain maps to 137-368 (TGSSVHAYVK…ALKHQNHSFK (232 aa)).

It belongs to the methylthiotransferase family. RimO subfamily. [4Fe-4S] cluster serves as cofactor.

The protein localises to the cytoplasm. The catalysed reaction is L-aspartate(89)-[ribosomal protein uS12]-hydrogen + (sulfur carrier)-SH + AH2 + 2 S-adenosyl-L-methionine = 3-methylsulfanyl-L-aspartate(89)-[ribosomal protein uS12]-hydrogen + (sulfur carrier)-H + 5'-deoxyadenosine + L-methionine + A + S-adenosyl-L-homocysteine + 2 H(+). Functionally, catalyzes the methylthiolation of an aspartic acid residue of ribosomal protein uS12. The chain is Ribosomal protein uS12 methylthiotransferase RimO from Helicobacter pylori (strain HPAG1).